We begin with the raw amino-acid sequence, 354 residues long: Replication factor C subunit 5 (354 aa).

ATP contacts are provided by residues Val-5, Ser-17, 43-51 (GPNGTGKKT), and Arg-231.

It belongs to the activator 1 small subunits family. Replication factor C (RFC) is a heteropentamer of subunits RFC1, RFC2, RFC3, RFC4 and RFC5 and forms a complex with POL30/PCNA in the presence of ATP. Component of the RAD24-RFC complex which consists of RAD24, RFC2, RFC3, RFC4 and RFC5 and associates with the checkpoint clamp DDC1:MEC3:RAD17 complex. Component of the ELG1-RFC complex which consists of ELG1, RFC2, RFC3, RFC4 and RFC5. Component of the CTF18-RFC complex, which consists of CTF18, CTF8, DCC1, RFC2, RFC3, RFC4 and RFC5. RFC5 interacts with ECO1.

It is found in the nucleus. Its function is as follows. Component of ATP-dependent clamp loader (RFC and RFC-like) complexes for DNA clamps, such as the POL30/PCNA homotrimer and the checkpoint clamp DDC1:MEC3:RAD17 complex. During a clamp loading circle, the RFC:clamp complex binds to DNA and the recognition of the double-stranded/single-stranded junction stimulates ATP hydrolysis by RFC. The complex presumably provides bipartite ATP sites in which one subunit supplies a catalytic site for hydrolysis of ATP bound to the neighboring subunit. Dissociation of RFC from the clamp leaves the clamp encircling DNA. Component of the replication factor C (RFC or activator 1) complex which loads POL30/PCNA and acts during elongation of primed DNA templates by DNA polymerase delta and epsilon. RFC has an essential but redundant activity in sister chromatid cohesion establishment. Component of the RFC-like complex CTF18-RFC which is required for efficient establishment of chromosome cohesion during S-phase and may load or unload POL30/PCNA. Component of the RFC-like RAD24-RFC complex which loads the checkpoint clamp DDC1:MEC3:RAD17 complex and is involved in DNA repair pathways. Component of the RFC-like ELG1-RFC complex which appears to have a role in DNA replication, replication fork re-start, recombination and repair. This Saccharomyces cerevisiae (strain ATCC 204508 / S288c) (Baker's yeast) protein is Replication factor C subunit 5 (RFC5).